A 526-amino-acid polypeptide reads, in one-letter code: Phosphoenolpyruvate carboxylase (526 aa).

The protein belongs to the PEPCase type 2 family. As to quaternary structure, homotetramer. Mg(2+) serves as cofactor.

It carries out the reaction oxaloacetate + phosphate = phosphoenolpyruvate + hydrogencarbonate. Its function is as follows. Catalyzes the irreversible beta-carboxylation of phosphoenolpyruvate (PEP) to form oxaloacetate (OAA), a four-carbon dicarboxylic acid source for the tricarboxylic acid cycle. This is Phosphoenolpyruvate carboxylase from Methanosarcina acetivorans (strain ATCC 35395 / DSM 2834 / JCM 12185 / C2A).